A 363-amino-acid polypeptide reads, in one-letter code: Serine/threonine-protein kinase SRK2A (363 aa).

The Protein kinase domain maps to 4–260; it reads YELVKDIGAG…IAEIKKHSWF (257 aa). ATP-binding positions include 10–18 and lysine 33; that span reads IGAGNFGVA. Aspartate 123 (proton acceptor) is an active-site residue. The tract at residues 306–363 is disordered; the sequence is SRSIGGFGWGGNGDADGKEEDAEDVEEEEEEVEEEEDDEDEYDKTVKEVHASGEVRIS. Residues 310-319 are compositionally biased toward gly residues; it reads GGFGWGGNGD. Acidic residues predominate over residues 322-347; it reads GKEEDAEDVEEEEEEVEEEEDDEDEY. The segment covering 348 to 363 has biased composition (basic and acidic residues); the sequence is DKTVKEVHASGEVRIS.

Belongs to the protein kinase superfamily. Ser/Thr protein kinase family. As to quaternary structure, interacts with TOPP1. Expressed in seedlings.

It carries out the reaction L-seryl-[protein] + ATP = O-phospho-L-seryl-[protein] + ADP + H(+). The catalysed reaction is L-threonyl-[protein] + ATP = O-phospho-L-threonyl-[protein] + ADP + H(+). This chain is Serine/threonine-protein kinase SRK2A (SRK2A), found in Arabidopsis thaliana (Mouse-ear cress).